The primary structure comprises 201 residues: Putative ankyrin repeat protein R868 (201 aa).

2 ANK repeats span residues 125–154 (YENN…NCYF) and 156–188 (KAKK…DYNF).

This is Putative ankyrin repeat protein R868 from Acanthamoeba polyphaga (Amoeba).